Reading from the N-terminus, the 548-residue chain is Myrosinase (548 aa).

An N-terminal signal peptide occupies residues 1–20 (MKLLHGLALVFLLAAASCKA). 3 disulfides stabilise this stretch: C26–C458, C34–C454, and C226–C236. Position 59 (Q59) interacts with substrate. Zn(2+) contacts are provided by H76 and D90. An N-linked (GlcNAc...) asparagine glycan is attached at N110. H161 and N206 together coordinate substrate. Residue Q207 participates in L-ascorbate binding. N-linked (GlcNAc...) asparagine glycosylation occurs at N240. R281 contacts L-ascorbate. N331 carries N-linked (GlcNAc...) asparagine glycosylation. Y352 is a binding site for substrate. E429 functions as the Nucleophile in the catalytic mechanism. Residues W477 and 484–485 (EF) each bind substrate. N520 carries an N-linked (GlcNAc...) asparagine glycan.

Belongs to the glycosyl hydrolase 1 family. As to quaternary structure, homodimer. As to expression, in vacuoles called myrosin grains of a certain class of cells, myrosin cells, distributed in the cotyledons and the axis of the embryo as well as in different organs of the growing plant.

The protein resides in the vacuole. The catalysed reaction is a thioglucoside + H2O = a sugar + a thiol.. Functionally, degradation of glucosinolates (glucose residue linked by a thioglucoside bound to an amino acid derivative) to glucose, sulfate and any of the products: thiocyanates, isothiocyanates, nitriles, epithionitriles or oxazolidine-2-thiones. The sequence is that of Myrosinase from Brassica napus (Rape).